Reading from the N-terminus, the 172-residue chain is Large ribosomal subunit protein uL10 (172 aa).

It belongs to the universal ribosomal protein uL10 family. Part of the ribosomal stalk of the 50S ribosomal subunit. The N-terminus interacts with L11 and the large rRNA to form the base of the stalk. The C-terminus forms an elongated spine to which L12 dimers bind in a sequential fashion forming a multimeric L10(L12)X complex.

In terms of biological role, forms part of the ribosomal stalk, playing a central role in the interaction of the ribosome with GTP-bound translation factors. The protein is Large ribosomal subunit protein uL10 (rplJ) of Liberibacter africanus (Citrus greening disease).